Here is a 231-residue protein sequence, read N- to C-terminus: Probable transglycosylase SceD (231 aa).

A signal peptide spans 1-27; it reads MKKTLLASSLAVGLGIVAGNAGHEAHA. A compositionally biased stretch (polar residues) spans 103–116; it reads APSAVQANQVQSQE. The tract at residues 103-153 is disordered; that stretch reads APSAVQANQVQSQEVEAPQNAQTQQPQASTSNNSQVTATPTESKSSEGSSV. Low complexity predominate over residues 119–137; sequence APQNAQTQQPQASTSNNSQ. Positions 138 to 153 are enriched in polar residues; sequence VTATPTESKSSEGSSV.

It belongs to the transglycosylase family. SceD subfamily.

Its subcellular location is the secreted. Functionally, is able to cleave peptidoglycan and affects clumping and separation of bacterial cells. The polypeptide is Probable transglycosylase SceD (sceD) (Staphylococcus aureus (strain COL)).